The sequence spans 337 residues: 4-hydroxy-3-methylbut-2-enyl diphosphate reductase (337 aa).

Cys38 provides a ligand contact to [4Fe-4S] cluster. The (2E)-4-hydroxy-3-methylbut-2-enyl diphosphate site is built by His67 and His100. Positions 67 and 100 each coordinate dimethylallyl diphosphate. Positions 67 and 100 each coordinate isopentenyl diphosphate. Cys122 contacts [4Fe-4S] cluster. His150 contacts (2E)-4-hydroxy-3-methylbut-2-enyl diphosphate. His150 contributes to the dimethylallyl diphosphate binding site. His150 provides a ligand contact to isopentenyl diphosphate. The active-site Proton donor is the Glu152. Thr190 contributes to the (2E)-4-hydroxy-3-methylbut-2-enyl diphosphate binding site. Cys220 is a binding site for [4Fe-4S] cluster. (2E)-4-hydroxy-3-methylbut-2-enyl diphosphate-binding residues include Ser248, Ser249, Asn250, and Ser293. Positions 248, 249, 250, and 293 each coordinate dimethylallyl diphosphate. Isopentenyl diphosphate-binding residues include Ser248, Ser249, Asn250, and Ser293.

This sequence belongs to the IspH family. The cofactor is [4Fe-4S] cluster.

It carries out the reaction isopentenyl diphosphate + 2 oxidized [2Fe-2S]-[ferredoxin] + H2O = (2E)-4-hydroxy-3-methylbut-2-enyl diphosphate + 2 reduced [2Fe-2S]-[ferredoxin] + 2 H(+). The enzyme catalyses dimethylallyl diphosphate + 2 oxidized [2Fe-2S]-[ferredoxin] + H2O = (2E)-4-hydroxy-3-methylbut-2-enyl diphosphate + 2 reduced [2Fe-2S]-[ferredoxin] + 2 H(+). Its pathway is isoprenoid biosynthesis; dimethylallyl diphosphate biosynthesis; dimethylallyl diphosphate from (2E)-4-hydroxy-3-methylbutenyl diphosphate: step 1/1. It participates in isoprenoid biosynthesis; isopentenyl diphosphate biosynthesis via DXP pathway; isopentenyl diphosphate from 1-deoxy-D-xylulose 5-phosphate: step 6/6. Functionally, catalyzes the conversion of 1-hydroxy-2-methyl-2-(E)-butenyl 4-diphosphate (HMBPP) into a mixture of isopentenyl diphosphate (IPP) and dimethylallyl diphosphate (DMAPP). Acts in the terminal step of the DOXP/MEP pathway for isoprenoid precursor biosynthesis. The protein is 4-hydroxy-3-methylbut-2-enyl diphosphate reductase of Mycolicibacterium vanbaalenii (strain DSM 7251 / JCM 13017 / BCRC 16820 / KCTC 9966 / NRRL B-24157 / PYR-1) (Mycobacterium vanbaalenii).